A 336-amino-acid polypeptide reads, in one-letter code: Holliday junction branch migration complex subunit RuvB (336 aa).

The large ATPase domain (RuvB-L) stretch occupies residues 4 to 184 (SDRLISSQSI…FGIVQRLEYY (181 aa)). Residues Ile23, Arg24, Gly65, Lys68, Thr69, Thr70, 131 to 133 (EDY), Arg174, Tyr184, and Arg221 contribute to the ATP site. Thr69 serves as a coordination point for Mg(2+). Residues 185–255 (SVDSLTQIVA…MAQQALEMLE (71 aa)) are small ATPAse domain (RuvB-S). The tract at residues 258–336 (QHGFDLMDRK…HFGFSAIEQE (79 aa)) is head domain (RuvB-H). Arg313 and Arg318 together coordinate DNA.

Belongs to the RuvB family. In terms of assembly, homohexamer. Forms an RuvA(8)-RuvB(12)-Holliday junction (HJ) complex. HJ DNA is sandwiched between 2 RuvA tetramers; dsDNA enters through RuvA and exits via RuvB. An RuvB hexamer assembles on each DNA strand where it exits the tetramer. Each RuvB hexamer is contacted by two RuvA subunits (via domain III) on 2 adjacent RuvB subunits; this complex drives branch migration. In the full resolvosome a probable DNA-RuvA(4)-RuvB(12)-RuvC(2) complex forms which resolves the HJ.

Its subcellular location is the cytoplasm. It carries out the reaction ATP + H2O = ADP + phosphate + H(+). The RuvA-RuvB-RuvC complex processes Holliday junction (HJ) DNA during genetic recombination and DNA repair, while the RuvA-RuvB complex plays an important role in the rescue of blocked DNA replication forks via replication fork reversal (RFR). RuvA specifically binds to HJ cruciform DNA, conferring on it an open structure. The RuvB hexamer acts as an ATP-dependent pump, pulling dsDNA into and through the RuvAB complex. RuvB forms 2 homohexamers on either side of HJ DNA bound by 1 or 2 RuvA tetramers; 4 subunits per hexamer contact DNA at a time. Coordinated motions by a converter formed by DNA-disengaged RuvB subunits stimulates ATP hydrolysis and nucleotide exchange. Immobilization of the converter enables RuvB to convert the ATP-contained energy into a lever motion, pulling 2 nucleotides of DNA out of the RuvA tetramer per ATP hydrolyzed, thus driving DNA branch migration. The RuvB motors rotate together with the DNA substrate, which together with the progressing nucleotide cycle form the mechanistic basis for DNA recombination by continuous HJ branch migration. Branch migration allows RuvC to scan DNA until it finds its consensus sequence, where it cleaves and resolves cruciform DNA. The protein is Holliday junction branch migration complex subunit RuvB of Legionella pneumophila subsp. pneumophila (strain Philadelphia 1 / ATCC 33152 / DSM 7513).